A 194-amino-acid chain; its full sequence is 3-isopropylmalate dehydratase small subunit (194 aa).

The protein belongs to the LeuD family. LeuD type 1 subfamily. Heterodimer of LeuC and LeuD.

The enzyme catalyses (2R,3S)-3-isopropylmalate = (2S)-2-isopropylmalate. It functions in the pathway amino-acid biosynthesis; L-leucine biosynthesis; L-leucine from 3-methyl-2-oxobutanoate: step 2/4. Its function is as follows. Catalyzes the isomerization between 2-isopropylmalate and 3-isopropylmalate, via the formation of 2-isopropylmaleate. The chain is 3-isopropylmalate dehydratase small subunit from Halalkalibacterium halodurans (strain ATCC BAA-125 / DSM 18197 / FERM 7344 / JCM 9153 / C-125) (Bacillus halodurans).